The following is a 663-amino-acid chain: Transmembrane 9 superfamily member 2 (663 aa).

A signal peptide spans 1-28 (MSARLPVLSPPRWPRLLLLSLLLLGAVP). Topologically, residues 29–300 (GPRRSGGFYL…LESMPHTHIQ (272 aa)) are lumenal. Residues 301–321 (WFSIMNSLVIVLFLSGMVAMI) traverse the membrane as a helical segment. Residues 322 to 374 (MLRTLHKDIARYNQMDSTEDAQEEFGWKLVHGDIFRPPRKGMLLSVFLGSGTQ) are Cytoplasmic-facing. A helical membrane pass occupies residues 375–395 (ILIMTFVTLFFACLGFLSPAN). At 396-398 (RGA) the chain is on the lumenal side. A helical transmembrane segment spans residues 399-419 (LMTCAVVLWVLLGTPAGYVAA). At 420-437 (RFYKSFGGEKWKTNVLLT) the chain is on the cytoplasmic side. A helical transmembrane segment spans residues 438-458 (SFLCPGIVFADFFIMNLILWG). At 459–466 (EGSSAAIP) the chain is on the lumenal side. A helical transmembrane segment spans residues 467-487 (FGTLVAILALWFCISVPLTFI). Residues 488–522 (GAYFGFKKNAIEHPVRTNQIPRQIPEQSFYTKPLP) lie on the Cytoplasmic side of the membrane. The chain crosses the membrane as a helical span at residues 523–543 (GIIMGGILPFGCIFIQLFFIL). Over 544 to 554 (NSIWSHQMYYM) the chain is Lumenal. The helical transmembrane segment at 555–575 (FGFLFLVFIILVITCSEATIL) threads the bilayer. Residues 576 to 591 (LCYFHLCAEDYHWQWR) lie on the Cytoplasmic side of the membrane. A helical membrane pass occupies residues 592-612 (SFLTSGFTAVYFLIYAVHYFF). Residues 613–631 (SKLQITGTASTILYFGYTM) lie on the Lumenal side of the membrane. The helical transmembrane segment at 632-652 (IMVLIFFLFTGTIGFFACFWF) threads the bilayer. At 653 to 663 (VTKIYSVVKVD) the chain is on the cytoplasmic side.

This sequence belongs to the nonaspanin (TM9SF) (TC 9.A.2) family.

The protein resides in the endosome membrane. It is found in the golgi outpost. The protein localises to the cytoplasm. Its subcellular location is the cytoskeleton. It localises to the microtubule organizing center. In terms of biological role, in the intracellular compartments, may function as a channel or small molecule transporter. The chain is Transmembrane 9 superfamily member 2 (TM9SF2) from Pongo abelii (Sumatran orangutan).